Consider the following 125-residue polypeptide: Fumarate reductase subunit D (125 aa).

3 consecutive transmembrane segments (helical) span residues 29 to 49 (VTAL…PLGW), 64 to 84 (NPIT…HAAH), and 102 to 122 (VIAL…GWML).

The protein belongs to the FrdD family. Part of an enzyme complex containing four subunits: a flavoprotein (FrdA), an iron-sulfur protein (FrdB), and two hydrophobic anchor proteins (FrdC and FrdD).

The protein localises to the cell membrane. Its function is as follows. Anchors the catalytic components of the fumarate reductase complex to the cell membrane, binds quinones. The polypeptide is Fumarate reductase subunit D (Mycobacterium bovis (strain BCG / Tokyo 172 / ATCC 35737 / TMC 1019)).